Reading from the N-terminus, the 130-residue chain is Small ribosomal subunit protein uS8 (130 aa).

This sequence belongs to the universal ribosomal protein uS8 family. Part of the 30S ribosomal subunit. Contacts proteins S5 and S12.

Its function is as follows. One of the primary rRNA binding proteins, it binds directly to 16S rRNA central domain where it helps coordinate assembly of the platform of the 30S subunit. This Aliivibrio fischeri (strain ATCC 700601 / ES114) (Vibrio fischeri) protein is Small ribosomal subunit protein uS8.